Reading from the N-terminus, the 102-residue chain is Small integral membrane protein 29 (102 aa).

N-linked (GlcNAc...) asparagine glycosylation is present at Asn-3. Residues 21–41 (VLGPFFLITLVGVVVAVVMYV) form a helical membrane-spanning segment.

It is found in the membrane. The sequence is that of Small integral membrane protein 29 from Mus musculus (Mouse).